The sequence spans 257 residues: Undecaprenyl-diphosphatase (257 aa).

The next 7 membrane-spanning stretches (helical) occupy residues 42–62 (YVLF…YMFL), 76–96 (IFHI…LKPI), 103–123 (PQYL…GVYF), 136–156 (CLTI…RSGA), 172–192 (IQFS…LEIW), 209–229 (QFLT…WAVI), and 237–257 (WVYF…YFQM).

Belongs to the UppP family.

The protein resides in the cell inner membrane. It catalyses the reaction di-trans,octa-cis-undecaprenyl diphosphate + H2O = di-trans,octa-cis-undecaprenyl phosphate + phosphate + H(+). Catalyzes the dephosphorylation of undecaprenyl diphosphate (UPP). Confers resistance to bacitracin. The polypeptide is Undecaprenyl-diphosphatase (Protochlamydia amoebophila (strain UWE25)).